The chain runs to 443 residues: Zinc finger CCCH domain-containing protein 63 (443 aa).

Disordered regions lie at residues 1 to 29 (MDFDLNGGNKRVFNRLGGGGGSTRPMAPT) and 56 to 99 (LPGP…SSSW). 2 C3H1-type zinc fingers span residues 30-56 (DTRQKVCFHWRAGRCNRSPCPYLHREL) and 109-136 (TKTEKVCNFWVDGNCTYGDKCRYLHCWS). WD repeat units follow at residues 149 to 190 (GHEK…GVLK), 228 to 265 (GPVGQVYSLVVGTDLLFAGTQDGSILAWRYNAATNCFE), 272 to 311 (GHTLAVVTLYVGANRLYSGSMDKTIKVWSLDNLQCIQTLT), 313 to 349 (HSSVVMSLICWDQFLLSCSLDNTVKIWAAIEGGNLEV), 354 to 396 (KEEH…LFIR), and 404 to 442 (FAKQEIRAIQIGPGGIFFTGDGTGQVKVWKWCTEPTAAL).

The protein is Zinc finger CCCH domain-containing protein 63 (ZFWD2) of Arabidopsis thaliana (Mouse-ear cress).